The primary structure comprises 706 residues: SPX domain-containing membrane protein Os09g0521800 (706 aa).

The SPX domain occupies 2–145; the sequence is VNFSNKLTKD…GYKFTDYYVR (144 aa). A run of 6 helical transmembrane segments spans residues 251-271, 281-301, 318-338, 340-359, 378-398, and 414-434; these read MSLV…YIVV, LGAA…AQVF, LLFS…AFDL, SLTI…ARAV, AAFV…AGLL, and LPGW…WILF. Residues 475–498 are disordered; the sequence is SEQDEEDDNGDEEHNETLSSSTTT. Residues 476 to 488 show a composition bias toward acidic residues; it reads EQDEEDDNGDEEH. Helical transmembrane passes span 520–540, 554–574, 583–603, 611–631, and 678–698; these read LLIY…SSVV, VFLA…GTYI, ILVA…KLTV, VCSA…NLSL, and LLNA…AATL.

This sequence belongs to the major facilitator superfamily.

It is found in the membrane. The sequence is that of SPX domain-containing membrane protein Os09g0521800 from Oryza sativa subsp. japonica (Rice).